The primary structure comprises 166 residues: Phospholipase A2 inhibitor clone 04 (166 aa).

An N-terminal signal peptide occupies residues 1–19; that stretch reads MRLILLSSLLLLGIFLANG. The 116-residue stretch at 46-161 folds into the C-type lectin domain; sequence LKDAFLTVHR…CDDNRLVVCE (116 aa). 2 disulfides stabilise this stretch: cysteine 83/cysteine 160 and cysteine 138/cysteine 152. Asparagine 122 carries N-linked (GlcNAc...) asparagine glycosylation.

The protein belongs to the alpha-type phospholipase A2 inhibitor family. In terms of assembly, homotrimer; non-covalently linked. Expressed by the liver.

It localises to the secreted. In terms of biological role, this phospholipase A2 inhibitor binds directly phospholipase A2 in the presence or absence of calcium. In Bothrops moojeni (Lance-headed viper), this protein is Phospholipase A2 inhibitor clone 04.